A 213-amino-acid chain; its full sequence is 3-isopropylmalate dehydratase small subunit (213 aa).

Belongs to the LeuD family. LeuD type 1 subfamily. In terms of assembly, heterodimer of LeuC and LeuD.

It carries out the reaction (2R,3S)-3-isopropylmalate = (2S)-2-isopropylmalate. It functions in the pathway amino-acid biosynthesis; L-leucine biosynthesis; L-leucine from 3-methyl-2-oxobutanoate: step 2/4. In terms of biological role, catalyzes the isomerization between 2-isopropylmalate and 3-isopropylmalate, via the formation of 2-isopropylmaleate. This is 3-isopropylmalate dehydratase small subunit from Neisseria meningitidis serogroup C (strain 053442).